A 448-amino-acid chain; its full sequence is MMLYISAKKAQVAFILYIVLVLRIISGNNDFCKPSSLNSEISGFIGYKCNFSNEGVHNLKPDMRERRSIFCTIHSYFIYDKIRLIIPKKSSSPEFKILPEKCFQKVYTDYENRVETDISELGLIEYEIEENDTNPNYNERTITISPFSPKDIEFFCFCDNTEKVISSIEGRSAMVHVRVLKYPHNILFTNLTNDLFTYLPKTYNESNFVSNVLEVELNDGELFVLACELINKKCFQEGKEKALYKSNKIIYHKNLTIFKAPFYVTSKDVNTECTCKFKNNNYKIVLKPKYEKKVIHGCNFSSNVSSKHTFTDSLDISLVDDSAHISCNVHLSEPKYNHLVGLNCPGDIIPDCFFQVYQPESEELEPSNIVYLDSQINIGDIEYYEDAEGDDKIKLFGIVGSIPKTTSFTCICKKDKKSAYMTVTIDSAYYGFLAKTFIFLIVAILLYI.

An N-terminal signal peptide occupies residues 1–27; it reads MMLYISAKKAQVAFILYIVLVLRIISG. Residues 45–182 enclose the 6-Cys 1 domain; the sequence is IGYKCNFSNE…AMVHVRVLKY (138 aa). Cystine bridges form between Cys49–Cys71 and Cys102–Cys156. N-linked (GlcNAc...) asparagine glycosylation is found at Asn50, Asn131, Asn190, Asn204, Asn254, Asn299, and Asn303. The 133-residue stretch at 294–426 folds into the 6-Cys 2 domain; that stretch reads VIHGCNFSSN…KSAYMTVTID (133 aa). 3 disulfides stabilise this stretch: Cys298/Cys327, Cys344/Cys412, and Cys352/Cys410. Asp426 is lipidated: GPI-anchor amidated aspartate. The propeptide at 427 to 448 is removed in mature form; it reads SAYYGFLAKTFIFLIVAILLYI.

Heterodimer; heterodimerizes with PF230.

The protein resides in the cell surface. It is found in the cell membrane. Gametocyte surface protein required for male fertility. This chain is Gametocyte surface protein P45/48 (PF45/48), found in Plasmodium falciparum (isolate 3D7).